We begin with the raw amino-acid sequence, 474 residues long: Sestrin homolog (474 aa).

This sequence belongs to the sestrin family.

Its subcellular location is the nucleus. The protein resides in the cytoplasm. Functionally, may function as a negative feedback regulator of TOR function. This chain is Sestrin homolog, found in Caenorhabditis elegans.